The following is a 388-amino-acid chain: MAGCCSVLGSFLFEYDTPRIVLIRSRKVGLMNRAVQLLILAYVIGWVFVWEKGYQETDSVVSSVTTKAKGVAVTNTSQLGFRIWDVADYVIPAQEENSLFIMTNMIVTVNQTQSTCPEIPDKTSICNSDADCTPGSVDTHSSGVATGRCVPFNESVKTCEVAAWCPVENDVGVPTPAFLKAAENFTLLVKNNIWYPKFNFSKRNILPNITTSYLKSCIYNAQTDPFCPIFRLGTIVEDAGHSFQEMAVEGGIMGIQIKWDCNLDRAASLCLPRYSFRRLDTRDLEHNVSPGYNFRFAKYYRDLAGKEQRTLTKAYGIRFDIIVFGKAGKFDIIPTMINVGSGLALLGVATVLCDVIVLYCMKKKYYYRDKKYKYVEDYEQGLSGEMNQ.

Topologically, residues 1–33 are cytoplasmic; it reads MAGCCSVLGSFLFEYDTPRIVLIRSRKVGLMNR. A helical transmembrane segment spans residues 34 to 54; that stretch reads AVQLLILAYVIGWVFVWEKGY. Topologically, residues 55–338 are extracellular; it reads QETDSVVSSV…KFDIIPTMIN (284 aa). ATP-binding residues include lysine 67 and lysine 69. CTP contacts are provided by lysine 67 and lysine 69. Asparagine 75 and asparagine 110 each carry an N-linked (GlcNAc...) asparagine glycan. 3 disulfides stabilise this stretch: cysteine 116–cysteine 165, cysteine 126–cysteine 149, and cysteine 132–cysteine 159. N-linked (GlcNAc...) asparagine glycosylation is found at asparagine 153 and asparagine 184. Residues threonine 186 and leucine 188 each coordinate ATP. Residue threonine 186 coordinates CTP. Residues asparagine 199 and asparagine 208 are each glycosylated (N-linked (GlcNAc...) asparagine). 2 disulfide bridges follow: cysteine 217–cysteine 227 and cysteine 261–cysteine 270. 3 residues coordinate ATP: asparagine 293, arginine 295, and lysine 313. 3 residues coordinate CTP: asparagine 293, arginine 295, and lysine 313. A helical transmembrane segment spans residues 339 to 359; sequence VGSGLALLGVATVLCDVIVLY. The Cytoplasmic portion of the chain corresponds to 360–388; sequence CMKKKYYYRDKKYKYVEDYEQGLSGEMNQ.

It belongs to the P2X receptor family. In terms of assembly, functional P2RXs are organized as homomeric and heteromeric trimers. Forms heterotrimer with P2RX1. Interacts with P2RX7 (via C-terminus); this interaction is functional only in the presence of ATP. Forms heterotrimer with P2RX4; functional differences between homomeric P2RX4 and P2RX4/6 heterotrimer are minor. Interacts with AP1M2. In terms of tissue distribution, widespread distribution in the brain. Strongly expressed in microglial cells. Also expressed in epithelial cells.

The protein localises to the cell membrane. The protein resides in the lysosome membrane. The catalysed reaction is K(+)(in) = K(+)(out). It carries out the reaction Na(+)(in) = Na(+)(out). It catalyses the reaction Ca(2+)(in) = Ca(2+)(out). With respect to regulation, activated by ATP. pH-dependent and inhibited by acidic pH. Its function is as follows. ATP-gated nonselective transmembrane cation channel permeable to potassium, sodium and calcium. CTP, but not GTP or UTP, functions as a weak affinity agonist for P2RX4. Activated by extracellularly released ATP, it plays multiple role in immunity and central nervous system physiology. Plays a key role in initial steps of T-cell activation and Ca(2+) microdomain formation. Also participates in basal T-cell activity without TCR/CD3 stimulation. Promotes the differentiation and activation of Th17 cells via expression of retinoic acid-related orphan receptor C/RORC. Upon activation, drives microglia motility via the PI3K/Akt pathway. Could also function as an ATP-gated cation channel of lysosomal membranes. This is P2X purinoceptor 4 (P2rx4) from Rattus norvegicus (Rat).